Reading from the N-terminus, the 231-residue chain is MLTRKQIELLEFIHKRLQRDGVPPSFDEMKDALDLRSKSGIHRLITALEERGFIRRLAHKARAIEIVKLPEALMGSMQGGFAPQVIDGDRLDPPVGAMPVSGIHAVELPVMGKIAAGTPIEAISEVSHTVAVPGQMMRQDAEHYALEVKGDSMINAGINNGDIVVIRETSVAESGDIVVALVDGHEATLKTLRKRGNAIALEAANPAYETRVYPAEMVRVQGKLVGLIRSY.

Residues 26-46 constitute a DNA-binding region (H-T-H motif); that stretch reads FDEMKDALDLRSKSGIHRLIT. Residues Ser-152 and Lys-190 each act as for autocatalytic cleavage activity in the active site.

This sequence belongs to the peptidase S24 family. Homodimer.

It catalyses the reaction Hydrolysis of Ala-|-Gly bond in repressor LexA.. Represses a number of genes involved in the response to DNA damage (SOS response), including recA and lexA. In the presence of single-stranded DNA, RecA interacts with LexA causing an autocatalytic cleavage which disrupts the DNA-binding part of LexA, leading to derepression of the SOS regulon and eventually DNA repair. The chain is LexA repressor from Dinoroseobacter shibae (strain DSM 16493 / NCIMB 14021 / DFL 12).